A 216-amino-acid polypeptide reads, in one-letter code: Adenylate kinase (216 aa).

10 to 15 (GAGKGT) is an ATP binding site. Residues 30–59 (STGDMLRAAVKAGTKLGQQVQGIMAAGKLV) are NMP. Residues Thr-31, Arg-36, 57 to 59 (KLV), 85 to 88 (GFPR), and Gln-92 each bind AMP. An LID region spans residues 122 to 159 (GRRVHMPSGRIYHLKFNPPKITDKDDMTGESLTLRKDD). Residues Arg-123 and 132–133 (IY) contribute to the ATP site. Positions 156 and 167 each coordinate AMP. ATP is bound at residue Arg-200.

Belongs to the adenylate kinase family. As to quaternary structure, monomer.

Its subcellular location is the cytoplasm. The enzyme catalyses AMP + ATP = 2 ADP. It participates in purine metabolism; AMP biosynthesis via salvage pathway; AMP from ADP: step 1/1. Functionally, catalyzes the reversible transfer of the terminal phosphate group between ATP and AMP. Plays an important role in cellular energy homeostasis and in adenine nucleotide metabolism. This chain is Adenylate kinase, found in Hamiltonella defensa subsp. Acyrthosiphon pisum (strain 5AT).